We begin with the raw amino-acid sequence, 167 residues long: Small ribosomal subunit protein uS5 (167 aa).

The 64-residue stretch at 12-75 (LQEKLIAVNR…EKARRNMVTI (64 aa)) folds into the S5 DRBM domain.

This sequence belongs to the universal ribosomal protein uS5 family. As to quaternary structure, part of the 30S ribosomal subunit. Contacts proteins S4 and S8.

Functionally, with S4 and S12 plays an important role in translational accuracy. Its function is as follows. Located at the back of the 30S subunit body where it stabilizes the conformation of the head with respect to the body. The polypeptide is Small ribosomal subunit protein uS5 (Vibrio vulnificus (strain CMCP6)).